Here is a 127-residue protein sequence, read N- to C-terminus: Protein KRTCAP2 homolog (127 aa).

The next 4 membrane-spanning stretches (helical) occupy residues 13-33 (LISL…SNFF), 41-61 (ILGG…IGAI), 65-85 (VKLL…SSVH), and 87-107 (VSGT…NHAS).

It belongs to the KRTCAP2 family. Component of the oligosaccharyltransferase (OST) complex.

The protein resides in the membrane. In terms of biological role, subunit of the oligosaccharyl transferase (OST) complex that catalyzes the initial transfer of a defined glycan (Glc(3)Man(9)GlcNAc(2) in eukaryotes) from the lipid carrier dolichol-pyrophosphate to an asparagine residue within an Asn-X-Ser/Thr consensus motif in nascent polypeptide chains, the first step in protein N-glycosylation. N-glycosylation occurs cotranslationally and the complex associates with the Sec61 complex at the channel-forming translocon complex that mediates protein translocation across the endoplasmic reticulum (ER). All subunits are required for a maximal enzyme activity. This is Protein KRTCAP2 homolog from Dictyostelium discoideum (Social amoeba).